A 103-amino-acid polypeptide reads, in one-letter code: MFILGKSNYTNFIYGHLVIRHIKYKLFDDYKKLIKKLSSKLKTSNSTKANLGDNFSLTLPTWPFFILSWFLHIRTLEFSSNGNKTANSISSVFFLFPKLLNVV.

Its subcellular location is the plastid. The protein resides in the chloroplast. This is an uncharacterized protein from Auxenochlorella pyrenoidosa (Freshwater green alga).